The following is a 55-amino-acid chain: Large ribosomal subunit protein bL33 (55 aa).

This sequence belongs to the bacterial ribosomal protein bL33 family.

The chain is Large ribosomal subunit protein bL33 from Xanthomonas oryzae pv. oryzae (strain PXO99A).